Consider the following 156-residue polypeptide: 1-methylthio-D-xylulose 5-phosphate methylsulfurylase (156 aa).

One can recognise a Cupin type-2 domain in the interval 55–122 (YFEVGPGGHS…ADEALGFLCM (68 aa)). Glu67, His69, His73, and His107 together coordinate Mn(2+). Cys121 is an active-site residue.

The enzyme catalyses S-methyl-1-thio-D-xylulose 5-phosphate + glutathione = S-(methylsulfanyl)glutathione + 1-deoxy-D-xylulose 5-phosphate. The catalysed reaction is S-(methylsulfanyl)glutathione + AH2 = methanethiol + glutathione + A. Its pathway is amino-acid biosynthesis; L-methionine biosynthesis via salvage pathway. The protein operates within metabolic intermediate biosynthesis; 1-deoxy-D-xylulose 5-phosphate biosynthesis. In terms of biological role, catalyzes the formation of S-(methylsulfanyl)glutathione and 1-deoxy-D-xylulose 5-phosphate (DXP) from 1-methylthioxylulose 5-phosphate (MTXu-5P). The S-(methylsulfanyl)glutathione is reductively cleaved to relase methanethiol in a second reaction. Involved in the MTA-isoprenoid shunt of the methionine salvage pathway. In Rhodospirillum rubrum (strain ATCC 11170 / ATH 1.1.1 / DSM 467 / LMG 4362 / NCIMB 8255 / S1), this protein is 1-methylthio-D-xylulose 5-phosphate methylsulfurylase.